A 287-amino-acid chain; its full sequence is Survival motor neuron protein (287 aa).

The segment at 1–27 (MGGGGGLPEPEDSVLFRRGTGQSDDSD) is disordered. Residues 8 to 39 (PEPEDSVLFRRGTGQSDDSDIWDDTALIKAYD) form a P1 (binding site for GEMIN2) region. Phosphothreonine is present on T20. A phosphoserine mark is found at S23 and S26. A Glycyl lysine isopeptide (Lys-Gly) (interchain with G-Cter in SUMO2) cross-link involves residue K46. The interval 52 to 83 (GDISEASDKPKSTPKRKPAKKNKSQKKNATTA) is disordered. The span at 63–77 (STPKRKPAKKNKSQK) shows a compositional bias: basic residues. T64 carries the post-translational modification Phosphothreonine. Residues 86–146 (QWKVGDKCSA…LSPACEVANN (61 aa)) form the Tudor domain. Positions 92–205 (KCSAVWSEDG…MSGSGLGPGK (114 aa)) are required for interaction with RPP20/POP7. Residues 148 to 216 (EQDTQENENE…GVKFSGPPPP (69 aa)) are disordered. Residues 157-180 (ESQISTDESENSSRSPGNKPNNIK) are compositionally biased toward polar residues. K205 participates in a covalent cross-link: Glycyl lysine isopeptide (Lys-Gly) (interchain with G-Cter in SUMO2). The P2 (binding site for SM B) stretch occupies residues 234–261 (PPIIPPPPPICPDSLDDADALGSMLISW). The interval 273 to 287 (GFKQNQKEGRCSHFN) is required for interaction with SYNCRIP.

It belongs to the SMN family. In terms of assembly, homooligomer; may form higher order homooligomers in the dimer to octamer range. Part of the core SMN complex that contains SMN1, GEMIN2/SIP1, DDX20/GEMIN3, GEMIN4, GEMIN5, GEMIN6, GEMIN7, GEMIN8 and STRAP/UNRIP. Part of the SMN-Sm complex that contains SMN1, GEMIN2/SIP1, DDX20/GEMIN3, GEMIN4, GEMIN5, GEMIN6, GEMIN7, GEMIN8, STRAP/UNRIP and the Sm proteins SNRPB, SNRPD1, SNRPD2, SNRPD3, SNRPE, SNRPF and SNRPG. Component of an import snRNP complex composed of KPNB1, RNUT1, SMN1 and ZNF259. Interacts with DDX20, FBL, NOLA1, RNUT1, SYNCRIP and with several spliceosomal snRNP core Sm proteins, including SNRPB, SNRPD1, SNRPD2, SNRPD3, SNRPE and ILF3. Interacts with GEMIN2; the interaction is direct. Interacts with GEMIN3; the interaction is direct. Interacts with GEMIN8; the interaction is direct. Interacts with SNRPB; the interaction is direct. Interacts (via Tudor domain) with SNRPD1 (via C-terminus); the interaction is direct. Interacts with SNRPD2; the interaction is direct. Interacts (via Tudor domain) with SNRPD3 (via C-terminus); the interaction is direct. Interacts with SNRPE; the interaction is direct. Interacts with OSTF1, LSM10, LSM11 and RPP20/POP7. Interacts (via C-terminal region) with ZPR1 (via C-terminal region). Interacts (via Tudor domain) with COIL. Interacts with SETX; recruits SETX to POLR2A. Interacts with POLR2A (via the C-terminal domain (CTD)). Interacts with PRMT5. Interacts with XRN2. Interacts (via C-terminus) with FMR1 (via C-terminus); the interaction is direct and occurs in a RNA-independent manner. Interacts (via Tudor domain) with SF3B2 ('Arg-508'-methylated form). Interacts with WRAP53/TCAB1. Interacts (via Tudor domain) with ELAVL4 in an RNA-independent manner; the interaction is required for localization of ELAVL4 to RNA granules. Interacts with FRG1.

It is found in the nucleus. The protein resides in the gem. The protein localises to the cajal body. Its subcellular location is the cytoplasm. It localises to the cytoplasmic granule. It is found in the perikaryon. The protein resides in the cell projection. The protein localises to the neuron projection. Its subcellular location is the axon. It localises to the myofibril. It is found in the sarcomere. The protein resides in the z line. In terms of biological role, the SMN complex catalyzes the assembly of small nuclear ribonucleoproteins (snRNPs), the building blocks of the spliceosome, and thereby plays an important role in the splicing of cellular pre-mRNAs. Most spliceosomal snRNPs contain a common set of Sm proteins SNRPB, SNRPD1, SNRPD2, SNRPD3, SNRPE, SNRPF and SNRPG that assemble in a heptameric protein ring on the Sm site of the small nuclear RNA to form the core snRNP (Sm core). In the cytosol, the Sm proteins SNRPD1, SNRPD2, SNRPE, SNRPF and SNRPG are trapped in an inactive 6S pICln-Sm complex by the chaperone CLNS1A that controls the assembly of the core snRNP. To assemble core snRNPs, the SMN complex accepts the trapped 5Sm proteins from CLNS1A forming an intermediate. Binding of snRNA inside 5Sm ultimately triggers eviction of the SMN complex, thereby allowing binding of SNRPD3 and SNRPB to complete assembly of the core snRNP. Within the SMN complex, SMN1 acts as a structural backbone and together with GEMIN2 it gathers the Sm complex subunits. Ensures the correct splicing of U12 intron-containing genes that may be important for normal motor and proprioceptive neurons development. Also required for resolving RNA-DNA hybrids created by RNA polymerase II, that form R-loop in transcription terminal regions, an important step in proper transcription termination. May also play a role in the metabolism of small nucleolar ribonucleoprotein (snoRNPs). This chain is Survival motor neuron protein (SMN1), found in Canis lupus familiaris (Dog).